Consider the following 468-residue polypeptide: ATP synthase subunit beta (468 aa).

155–162 lines the ATP pocket; that stretch reads GGAGVGKT.

The protein belongs to the ATPase alpha/beta chains family. F-type ATPases have 2 components, CF(1) - the catalytic core - and CF(0) - the membrane proton channel. CF(1) has five subunits: alpha(3), beta(3), gamma(1), delta(1), epsilon(1). CF(0) has three main subunits: a(1), b(2) and c(9-12). The alpha and beta chains form an alternating ring which encloses part of the gamma chain. CF(1) is attached to CF(0) by a central stalk formed by the gamma and epsilon chains, while a peripheral stalk is formed by the delta and b chains.

It localises to the cell membrane. The catalysed reaction is ATP + H2O + 4 H(+)(in) = ADP + phosphate + 5 H(+)(out). Functionally, produces ATP from ADP in the presence of a proton gradient across the membrane. The catalytic sites are hosted primarily by the beta subunits. This is ATP synthase subunit beta from Streptococcus pyogenes serotype M5 (strain Manfredo).